Consider the following 475-residue polypeptide: Ribulose bisphosphate carboxylase large chain (475 aa).

The propeptide occupies 1–2; it reads MS. P3 is subject to N-acetylproline. Substrate is bound by residues T65, N123, and T173. The Proton acceptor role is filled by K175. A substrate-binding site is contributed by K177. Residues K201, D203, and E204 each coordinate Mg(2+). N6-carboxylysine is present on K201. Positions 204, 294, 295, 327, 334, 379, 381, 403, and 404 each coordinate substrate. The active-site Proton acceptor is the H294.

This sequence belongs to the RuBisCO large chain family. Type I subfamily. As to quaternary structure, heterohexadecamer of 8 large chains and 8 small chains. Mg(2+) serves as cofactor. The disulfide bond which can form between Cys-247 in the large chain dimeric partners within the hexadecamer appears to be associated with oxidative stress and protein turnover. The disulfide bonds reported in 1RBO may be the result of oxidation during crystallization.

It is found in the plastid. It localises to the chloroplast. It carries out the reaction 2 (2R)-3-phosphoglycerate + 2 H(+) = D-ribulose 1,5-bisphosphate + CO2 + H2O. The catalysed reaction is D-ribulose 1,5-bisphosphate + O2 = 2-phosphoglycolate + (2R)-3-phosphoglycerate + 2 H(+). Its activity is regulated as follows. Abscisic acid (ABA) causes weak inhibition of RuBisCO catalytic activity, but more potent inhibition of RuBisCO activation. In terms of biological role, ruBisCO catalyzes two reactions: the carboxylation of D-ribulose 1,5-bisphosphate, the primary event in carbon dioxide fixation, as well as the oxidative fragmentation of the pentose substrate in the photorespiration process. Both reactions occur simultaneously and in competition at the same active site. Binds to abscisic acid (ABA) which has weakly inhibits carboxylation and more strongly inhibits enzyme activation. This is Ribulose bisphosphate carboxylase large chain from Spinacia oleracea (Spinach).